Here is a 221-residue protein sequence, read N- to C-terminus: Translation initiation factor 6 (221 aa).

It belongs to the eIF-6 family.

Its function is as follows. Binds to the 50S ribosomal subunit and prevents its association with the 30S ribosomal subunit to form the 70S initiation complex. This Methanocella arvoryzae (strain DSM 22066 / NBRC 105507 / MRE50) protein is Translation initiation factor 6.